Reading from the N-terminus, the 316-residue chain is Biotin synthase (316 aa).

The 229-residue stretch at 36 to 264 folds into the Radical SAM core domain; the sequence is FDNRITLCAI…TATLRICGGR (229 aa). Residues Cys-53, Cys-57, and Cys-60 each contribute to the [4Fe-4S] cluster site. [2Fe-2S] cluster contacts are provided by Cys-129, Cys-189, and Arg-259.

Belongs to the radical SAM superfamily. Biotin synthase family. As to quaternary structure, homodimer. The cofactor is [4Fe-4S] cluster. [2Fe-2S] cluster serves as cofactor.

It catalyses the reaction (4R,5S)-dethiobiotin + (sulfur carrier)-SH + 2 reduced [2Fe-2S]-[ferredoxin] + 2 S-adenosyl-L-methionine = (sulfur carrier)-H + biotin + 2 5'-deoxyadenosine + 2 L-methionine + 2 oxidized [2Fe-2S]-[ferredoxin]. It functions in the pathway cofactor biosynthesis; biotin biosynthesis; biotin from 7,8-diaminononanoate: step 2/2. In terms of biological role, catalyzes the conversion of dethiobiotin (DTB) to biotin by the insertion of a sulfur atom into dethiobiotin via a radical-based mechanism. The chain is Biotin synthase from Desulfovibrio desulfuricans (strain ATCC 27774 / DSM 6949 / MB).